Reading from the N-terminus, the 265-residue chain is Urease accessory protein UreH (265 aa).

The protein belongs to the UreD family. UreH, UreF and UreG form a complex that acts as a GTP-hydrolysis-dependent molecular chaperone, activating the urease apoprotein by helping to assemble the nickel containing metallocenter of UreC. The UreE protein probably delivers the nickel.

It is found in the cytoplasm. In terms of biological role, required for maturation of urease via the functional incorporation of the urease nickel metallocenter. The protein is Urease accessory protein UreH of Helicobacter pylori (strain J99 / ATCC 700824) (Campylobacter pylori J99).